A 307-amino-acid chain; its full sequence is Elongation factor Ts (307 aa).

Positions 80–83 (TDFV) are involved in Mg(2+) ion dislocation from EF-Tu.

Belongs to the EF-Ts family.

It localises to the cytoplasm. Its function is as follows. Associates with the EF-Tu.GDP complex and induces the exchange of GDP to GTP. It remains bound to the aminoacyl-tRNA.EF-Tu.GTP complex up to the GTP hydrolysis stage on the ribosome. This is Elongation factor Ts from Clostridium botulinum (strain Kyoto / Type A2).